The following is a 259-amino-acid chain: Imidazole glycerol phosphate synthase subunit HisF (259 aa).

Active-site residues include Asp-11 and Asp-130.

Belongs to the HisA/HisF family. Heterodimer of HisH and HisF.

The protein resides in the cytoplasm. It carries out the reaction 5-[(5-phospho-1-deoxy-D-ribulos-1-ylimino)methylamino]-1-(5-phospho-beta-D-ribosyl)imidazole-4-carboxamide + L-glutamine = D-erythro-1-(imidazol-4-yl)glycerol 3-phosphate + 5-amino-1-(5-phospho-beta-D-ribosyl)imidazole-4-carboxamide + L-glutamate + H(+). It functions in the pathway amino-acid biosynthesis; L-histidine biosynthesis; L-histidine from 5-phospho-alpha-D-ribose 1-diphosphate: step 5/9. Its function is as follows. IGPS catalyzes the conversion of PRFAR and glutamine to IGP, AICAR and glutamate. The HisF subunit catalyzes the cyclization activity that produces IGP and AICAR from PRFAR using the ammonia provided by the HisH subunit. The chain is Imidazole glycerol phosphate synthase subunit HisF from Desulforapulum autotrophicum (strain ATCC 43914 / DSM 3382 / VKM B-1955 / HRM2) (Desulfobacterium autotrophicum).